The chain runs to 828 residues: E3 ubiquitin-protein ligase bre-1 (828 aa).

Residues 1–25 (MMKRNNEGIGGEGVANSPPDDTQQK) form a disordered region. The interval 1 to 309 (MMKRNNEGIG…SREIEALRAD (309 aa)) is interaction with ubc-1. Coiled coils occupy residues 53–92 (QAAK…FLKV) and 185–251 (HKEL…TEKQ). Residues 269–298 (ASGNATASSSATLNQSEKKMGSPGSPPSES) are compositionally biased toward low complexity. The tract at residues 269-304 (ASGNATASSSATLNQSEKKMGSPGSPPSESTSREIE) is disordered. 3 coiled-coil regions span residues 311-345 (DEQA…KMET), 460-616 (VNTL…RNLK), and 660-756 (DEVL…NDSA). An RING-type zinc finger spans residues 776-815 (CPSCKTRPKDCIMLKCYHLFCETCIKTMYDTRQRKCPKCN).

The protein belongs to the BRE1 family. As to quaternary structure, interacts with ubc-1. Interacts with mrg-1.

The protein resides in the nucleus. The enzyme catalyses S-ubiquitinyl-[E2 ubiquitin-conjugating enzyme]-L-cysteine + [acceptor protein]-L-lysine = [E2 ubiquitin-conjugating enzyme]-L-cysteine + N(6)-ubiquitinyl-[acceptor protein]-L-lysine.. It participates in protein modification; protein ubiquitination. In terms of biological role, E3 ubiquitin-protein ligase that mediates monoubiquitination of 'Lys-117' of histone H2B. H2B 'Lys-117' ubiquitination gives a specific tag for epigenetic transcriptional activation and is also prerequisite for histone H3 'Lys-4' and 'Lys-79' methylation. Involved in regulating stem cell proliferative fate. In Caenorhabditis briggsae, this protein is E3 ubiquitin-protein ligase bre-1.